Here is a 255-residue protein sequence, read N- to C-terminus: uncharacterized protein (255 aa).

Residues 1-23 (MKRLNKLVLYISFLILVISFTAG) form the signal peptide. The N-palmitoyl cysteine moiety is linked to residue C24. C24 carries the S-diacylglycerol cysteine lipid modification.

The protein belongs to the staphylococcal tandem lipoprotein family.

It is found in the cell membrane. This is an uncharacterized protein from Staphylococcus aureus (strain NCTC 8325 / PS 47).